The following is a 199-amino-acid chain: Recombination protein RecR (199 aa).

A C4-type zinc finger spans residues 57 to 72; sequence CQSCRTFTEETYCPIC. The Toprim domain occupies 81 to 176; it reads EVICVVETPA…TVSRIAHGVP (96 aa).

This sequence belongs to the RecR family.

May play a role in DNA repair. It seems to be involved in an RecBC-independent recombinational process of DNA repair. It may act with RecF and RecO. The polypeptide is Recombination protein RecR (Shewanella pealeana (strain ATCC 700345 / ANG-SQ1)).